Here is a 517-residue protein sequence, read N- to C-terminus: GMP synthase [glutamine-hydrolyzing] (517 aa).

One can recognise a Glutamine amidotransferase type-1 domain in the interval 11–202 (KIIALDFGSQ…AFDVCGAKAN (192 aa)). The Nucleophile role is filled by Cys-88. Residues His-176 and Glu-178 contribute to the active site. The region spanning 203–392 (WTMDDFIDMQ…LGIPHELVWR (190 aa)) is the GMPS ATP-PPase domain. 230 to 236 (SGGVDSS) serves as a coordination point for ATP.

As to quaternary structure, homodimer.

The catalysed reaction is XMP + L-glutamine + ATP + H2O = GMP + L-glutamate + AMP + diphosphate + 2 H(+). It functions in the pathway purine metabolism; GMP biosynthesis; GMP from XMP (L-Gln route): step 1/1. Its function is as follows. Catalyzes the synthesis of GMP from XMP. The sequence is that of GMP synthase [glutamine-hydrolyzing] from Limosilactobacillus reuteri (strain DSM 20016) (Lactobacillus reuteri).